The primary structure comprises 143 residues: Ribosome maturation factor RimP (143 aa).

This sequence belongs to the RimP family.

It is found in the cytoplasm. Its function is as follows. Required for maturation of 30S ribosomal subunits. This is Ribosome maturation factor RimP from Neisseria meningitidis serogroup C / serotype 2a (strain ATCC 700532 / DSM 15464 / FAM18).